A 104-amino-acid polypeptide reads, in one-letter code: Large ribosomal subunit protein uL24 (104 aa).

Belongs to the universal ribosomal protein uL24 family. Part of the 50S ribosomal subunit.

Its function is as follows. One of two assembly initiator proteins, it binds directly to the 5'-end of the 23S rRNA, where it nucleates assembly of the 50S subunit. Functionally, one of the proteins that surrounds the polypeptide exit tunnel on the outside of the subunit. This chain is Large ribosomal subunit protein uL24, found in Pectobacterium atrosepticum (strain SCRI 1043 / ATCC BAA-672) (Erwinia carotovora subsp. atroseptica).